The sequence spans 460 residues: ATP synthase subunit beta (460 aa).

148-155 (GGAGVGKT) is an ATP binding site.

This sequence belongs to the ATPase alpha/beta chains family. In terms of assembly, F-type ATPases have 2 components, CF(1) - the catalytic core - and CF(0) - the membrane proton channel. CF(1) has five subunits: alpha(3), beta(3), gamma(1), delta(1), epsilon(1). CF(0) has three main subunits: a(1), b(2) and c(9-12). The alpha and beta chains form an alternating ring which encloses part of the gamma chain. CF(1) is attached to CF(0) by a central stalk formed by the gamma and epsilon chains, while a peripheral stalk is formed by the delta and b chains.

The protein localises to the cell inner membrane. The catalysed reaction is ATP + H2O + 4 H(+)(in) = ADP + phosphate + 5 H(+)(out). Produces ATP from ADP in the presence of a proton gradient across the membrane. The catalytic sites are hosted primarily by the beta subunits. The sequence is that of ATP synthase subunit beta from Alcanivorax borkumensis (strain ATCC 700651 / DSM 11573 / NCIMB 13689 / SK2).